Reading from the N-terminus, the 235-residue chain is NADH-quinone oxidoreductase subunit B 2 (235 aa).

The segment covering 1 to 14 (MGLTSRPTPASRQP) has biased composition (low complexity). A disordered region spans residues 1 to 24 (MGLTSRPTPASRQPASPPPADPVL). Residues C63, C64, C129, and C159 each contribute to the [4Fe-4S] cluster site. A disordered region spans residues 188-235 (TGATGGGPSTDALRSGLVAAPTAPGPTAPASTAPGPTAPAPTQDEERR).

The protein belongs to the complex I 20 kDa subunit family. In terms of assembly, NDH-1 is composed of 14 different subunits. Subunits NuoB, C, D, E, F, and G constitute the peripheral sector of the complex. [4Fe-4S] cluster is required as a cofactor.

The protein localises to the cell membrane. It catalyses the reaction a quinone + NADH + 5 H(+)(in) = a quinol + NAD(+) + 4 H(+)(out). NDH-1 shuttles electrons from NADH, via FMN and iron-sulfur (Fe-S) centers, to quinones in the respiratory chain. The immediate electron acceptor for the enzyme in this species is believed to be a menaquinone. Couples the redox reaction to proton translocation (for every two electrons transferred, four hydrogen ions are translocated across the cytoplasmic membrane), and thus conserves the redox energy in a proton gradient. This Streptomyces griseus subsp. griseus (strain JCM 4626 / CBS 651.72 / NBRC 13350 / KCC S-0626 / ISP 5235) protein is NADH-quinone oxidoreductase subunit B 2.